Reading from the N-terminus, the 1286-residue chain is MKLLLLNILLLCCLADKLNEFSADIDYYDLGIMSRGKNAGSWYHSYTHQYDVFYYLAMQPWRHFVWTTCETTKGNKECYKYIINEDHNLNAQQLNNIKNLDKQDFCQKEYAYPIEKYEVDWDNVPVDEQQIESVDINGKTCFKYAAKRPLAYVYLNTKMTYATKTEAYDVCRMDFIGGRSITFRSFNNENKDFIDQYNTNTTSKCIIDVHKNNVNTHLAIILGITDSTVIKSLQEKLSVLSQLTTVDGVTIYYLKGDSYATDNIKLKDLKYETLVKYTAGQGQVDPLVNIAKNDLFKMISDKKIKRGTMVVLMDNALGSEFNAETEFDRKNISVHTVVLNRNKDSKITYSALKLVSLGPHYHEFTSNSEVSTTIDELFKGIRANLTERCDRDKCSGFCDAMNRCTCPMCCENDCFYTSCDVETGSCIPWPKAKPKAKKECPATCVGLYECKDLEGCVVTKYNASCEPKVKCMVPYCDDDNNLKEVCKQKANCEADQKPSSDGYCWSYTCDETTGFCKKYKHGNLCTGKTTNCQEYVCDSEQRCTVQEKVCVKTSPYIEMSCYVAKCNLNTGMCENRLSCDTYSSCGGDSTGSVCKCDASTGNQCKCNKVENGNYCDSSKHEICDYTGDKPKCIVSECTEDLVRDGCLIKRCNKTSKTTYWENVDCSNTKIEFAQDGKSETMCKPYYSATCLNGQCVVQAVGDVSNVGCGYCSMGTDNVITYHDDCDSRKSQCGNFNGKCQPNGDNSYSCVFEKDKTSSKSDNDICAECSSLTCPADTTYRTYTYDSKTGTCKATVKPTPSCSVCEKGKFVEKCKDQKLERKVTLEDGKEYQYNIPKDCVNEQCIPRTYVDCLANDDNFGEIYKFYLPCQAYVTATYHYSSLFNLTSYKLHLPQSEEFMKEADKEAYCTYEITTRECKTCSLTETKEKVEEIDLCAEETKNGGVPFKCKNNNCIIDPNFDCQPIECKIQEIVITEKDGIKTTTCKDTGKTTCDTNNKRIEDARKAFIEGKEGIEQVECASTVCQNDNSCPIIADVEKCNQNTEVDYGCKAMTGECDGTTYLCKFVQLTDDPSLDSEHFRTKSGVELNNACLKYKCVESKGSDGKITHKWEIDTERSNIDPKPRNPCETATCDQTTGETIYTKKTCTVSEEFPTITPNQGRCFYCQCSYLDGSSVLTMYGETDKEYYDLDACGNCRVWNQTDRTQQLNNHTECILAGEINNVGAIAAATTVAVVVVAVVVALIVVSIGLFKTYQLVSSAMKNAITTTNENAEYVGADNEATNAATYNG.

Positions 1–15 (MKLLLLNILLLCCLA) are cleaved as a signal peptide. The Extracellular portion of the chain corresponds to 16-1227 (DKLNEFSADI…NNVGAIAAAT (1212 aa)). N-linked (GlcNAc...) asparagine glycans are attached at residues asparagine 200, asparagine 331, asparagine 384, asparagine 462, asparagine 652, asparagine 883, asparagine 1197, and asparagine 1207. A helical membrane pass occupies residues 1228 to 1248 (TVAVVVVAVVVALIVVSIGLF). Topologically, residues 1249-1286 (KTYQLVSSAMKNAITTTNENAEYVGADNEATNAATYNG) are cytoplasmic.

As to quaternary structure, heterodimer composed of a 170 kDa heavy subunit (hgl) and a 31/35 kDa light subunit (lgl); disulfide-linked. Post-translationally, N-glycosylated.

Its subcellular location is the cell membrane. Functionally, lectin which binds galactose and N-acetyl-D-galactosamine of host glycoproteins and thus mediates adhesion to host cells. Mediates adherence to host colonic mucins, an essential step for pathogenic tissue invasion. This is Galactose/N-acetyl-D-galactosamine lectin heavy subunit 2 from Entamoeba histolytica (strain ATCC 30459 / HM-1:IMSS / ABRM).